The primary structure comprises 391 residues: GTPase Obg (391 aa).

The 159-residue stretch at 1-159 (MKFVDEASIL…RDLLLELMLL (159 aa)) folds into the Obg domain. The tract at residues 127–147 (NTRFKSSVNRTPRQKTNGTPG) is disordered. Positions 129–145 (RFKSSVNRTPRQKTNGT) are enriched in polar residues. The 174-residue stretch at 160–333 (ADVGMLGMPN…LCWDVMTFII (174 aa)) folds into the OBG-type G domain. GTP is bound by residues 166–173 (GMPNAGKS), 191–195 (FTTLV), 213–216 (DIPG), 283–286 (NKID), and 314–316 (SAA). The Mg(2+) site is built by serine 173 and threonine 193.

Belongs to the TRAFAC class OBG-HflX-like GTPase superfamily. OBG GTPase family. Monomer. It depends on Mg(2+) as a cofactor.

Its subcellular location is the cytoplasm. In terms of biological role, an essential GTPase which binds GTP, GDP and possibly (p)ppGpp with moderate affinity, with high nucleotide exchange rates and a fairly low GTP hydrolysis rate. Plays a role in control of the cell cycle, stress response, ribosome biogenesis and in those bacteria that undergo differentiation, in morphogenesis control. This chain is GTPase Obg, found in Salmonella arizonae (strain ATCC BAA-731 / CDC346-86 / RSK2980).